Consider the following 217-residue polypeptide: 2-phospho-L-lactate guanylyltransferase (217 aa).

This sequence belongs to the CofC family. In terms of assembly, homodimer.

It carries out the reaction (2S)-2-phospholactate + GTP + H(+) = (2S)-lactyl-2-diphospho-5'-guanosine + diphosphate. The protein operates within cofactor biosynthesis; coenzyme F420 biosynthesis. Guanylyltransferase that catalyzes the activation of (2S)-2-phospholactate (2-PL) as (2S)-lactyl-2-diphospho-5'-guanosine, via the condensation of 2-PL with GTP. It is involved in the biosynthesis of coenzyme F420, a hydride carrier cofactor. This Methanospirillum hungatei JF-1 (strain ATCC 27890 / DSM 864 / NBRC 100397 / JF-1) protein is 2-phospho-L-lactate guanylyltransferase.